The sequence spans 580 residues: Sensor histidine kinase YvrG (580 aa).

Topologically, residues Met1–Lys6 are cytoplasmic. Residues Phe7–Val27 traverse the membrane as a helical segment. Residues Ala28–Ala261 are Extracellular-facing. A helical membrane pass occupies residues Met262–Phe282. At Arg283 to Gln580 the chain is on the cytoplasmic side. Positions Gly363 to Gln580 constitute a Histidine kinase domain. His366 is modified (phosphohistidine; by autocatalysis).

The protein resides in the cell membrane. The enzyme catalyses ATP + protein L-histidine = ADP + protein N-phospho-L-histidine.. Member of the two-component regulatory system YvrG/YvrH that positively regulates 7 transcriptional units (wprA, wapA-yxxG, dltABCDE, sunA, sunT-bdbA-yolJ-bdbB, sigO-rsoA, and sigX-rsiX), and negatively regulates the lytABC operon. Probably activates YvrH by phosphorylation. The chain is Sensor histidine kinase YvrG (yvrG) from Bacillus subtilis (strain 168).